Consider the following 396-residue polypeptide: L-cysteine desulfidase (396 aa).

The Proton acceptor role is filled by cysteine 23. [4Fe-4S] cluster contacts are provided by cysteine 287, cysteine 329, and cysteine 336.

The protein belongs to the L-cysteine desulfidase family. As to quaternary structure, homotrimer. [4Fe-4S] cluster serves as cofactor.

It carries out the reaction L-cysteine + H2O = hydrogen sulfide + pyruvate + NH4(+) + H(+). In terms of biological role, catalyzes the cleavage of L-cysteine to form 2-aminoprop-2-enoate and sulfide. The former then spontaneously hydrolyzes to pyruvate and NH(3). May be responsible for the production of sulfide required for the biosynthesis of iron-sulfur centers in this archaea. This chain is L-cysteine desulfidase, found in Methanococcus maripaludis (strain DSM 14266 / JCM 13030 / NBRC 101832 / S2 / LL).